The sequence spans 298 residues: uncharacterized protein (298 aa).

A run of 8 helical transmembrane segments spans residues 5–25 (SLATLFALLILATLINRFLLW), 52–72 (VISGPRWMTLTFFALISFLAL), 105–125 (LFLLFIPLAGFLILATGQVLV), 138–158 (IFWGWIMTVFALSHAAWLLML), 163–183 (IQGGALLVLFLLALTESNDIA), 208–228 (GLMGGVITIMIASLIIGPLLT), 236–256 (LLAGLLIGISGFCGDVVMSAI), and 273–293 (GGLLDRIDSLIFTAPVFFYFI).

The protein belongs to the CDS family.

It localises to the cell membrane. This is an uncharacterized protein from Escherichia coli (strain K12).